The chain runs to 338 residues: L-serine dehydratase (338 aa).

Lysine 39 carries the post-translational modification N6-(pyridoxal phosphate)lysine.

The protein belongs to the serine/threonine dehydratase family. Pyridoxal 5'-phosphate serves as cofactor.

The protein resides in the cytoplasm. It carries out the reaction L-serine = pyruvate + NH4(+). It functions in the pathway carbohydrate biosynthesis; gluconeogenesis. This is L-serine dehydratase (SDL1) from Saccharomyces cerevisiae (strain YJM789) (Baker's yeast).